The primary structure comprises 567 residues: DNA-binding protein REPIN1 (567 aa).

The segment at 17 to 52 (PRLLSGPSQESPQTLGKESRGLRQQGTSVAQSGAQA) is disordered. The span at 22 to 50 (GPSQESPQTLGKESRGLRQQGTSVAQSGA) shows a compositional bias: polar residues. Ser27 is modified (phosphoserine). Thr30 is subject to Phosphothreonine. N6-acetyllysine is present on Lys33. The segment at 57–79 (HRCAHCRRHFPGWVALWLHTRRC) adopts a C2H2-type 1; atypical zinc-finger fold. 7 consecutive C2H2-type zinc fingers follow at residues 85-107 (LPCPECGRRFRHAPFLALHRQVH), 116-138 (FACHLCGQSFRGWVALVLHLRAH), 145-168 (IACPKCERRFWRRKQLRAHLRRCH), 177-199 (FICGNCGRSFAQWDQLVAHKRVH), 236-258 (FQCACCGKRFRHKPNLIAHRRVH), 264-286 (HQCPECGKRFTNKPYLTSHRRIH), and 292-314 (YPCKECGRRFRHKPNLLSHSKIH). Lys276 is modified (N6-acetyllysine). The span at 305-315 (PNLLSHSKIHK) shows a compositional bias: basic residues. Residues 305–372 (PNLLSHSKIH…HPQDPIEAPP (68 aa)) form a disordered region. Positions 345–362 (PAVPLKPAQEPPPGAPPE) are enriched in pro residues. C2H2-type zinc fingers lie at residues 375-397 (YSCDDCGRSFRLERFLRAHQRQH), 403-425 (FTCAECGKNFGKKTHLVAHSRVH), 431-453 (FACEECGRRFSQGSHLAAHRRDH), 459-481 (FVCPDCGKAFRHKPYLAAHRRIH), 487-509 (YVCPDCGKAFSQKSNLVSHRRIH), 515-537 (YACPDCDRSFSQKSNLITHRKSH), and 543-565 (FCCAICGQTFDDEERLLAHQKKH).

In terms of assembly, homodimers and homomultimers. Found in a complex with RIP60 and RIP100. In terms of tissue distribution, expressed in adipose tissue and bone tissue.

The protein localises to the nucleus. Its subcellular location is the cytoplasm. It localises to the cytosol. Sequence-specific double-stranded DNA-binding protein. Binds ATT-rich and T-rich DNA sequences and facilitates DNA bending. May regulate the expression of genes involved in cellular fatty acid import, including SCARB1/CD36, and genes involved in lipid droplet formation. May regulate the expression of LCN2, and thereby influence iron metabolism and apoptosis-related pathways. May regulate the expression of genes involved in glucose transport. The sequence is that of DNA-binding protein REPIN1 (REPIN1) from Homo sapiens (Human).